The sequence spans 404 residues: Tryptophan synthase beta chain (404 aa).

The residue at position 98 (lysine 98) is an N6-(pyridoxal phosphate)lysine.

Belongs to the TrpB family. Tetramer of two alpha and two beta chains. Requires pyridoxal 5'-phosphate as cofactor.

It catalyses the reaction (1S,2R)-1-C-(indol-3-yl)glycerol 3-phosphate + L-serine = D-glyceraldehyde 3-phosphate + L-tryptophan + H2O. It functions in the pathway amino-acid biosynthesis; L-tryptophan biosynthesis; L-tryptophan from chorismate: step 5/5. Functionally, the beta subunit is responsible for the synthesis of L-tryptophan from indole and L-serine. This Methanocaldococcus jannaschii (strain ATCC 43067 / DSM 2661 / JAL-1 / JCM 10045 / NBRC 100440) (Methanococcus jannaschii) protein is Tryptophan synthase beta chain (trpB).